The chain runs to 473 residues: MFDKKLLESSELYDKRYRNFSTLIILPLFILLVGGVIFTFFAHKELTVISTGSIEPTKIVAKIQSTNANPIIENNLKEGKVVKENSLLLKYNGTPEQTQLSELLTQKKQVLDKKAQLDLLQKSLTNEKNEFPTTDSFGYEKSFENYESQVKSLEATIQKSNQAVEDQNKSTESQKQAIQNQVATLQQAIQNYSEIENAVSSGGGVSQDNPYLSQYNSYQAQQATLEADLKNQKNPDETAKQATKSQEESLKSQFLSGLASSKDSLKSQIQSFNVQESSLTGSNAYDNSQSSQILTLKTQALSASNKEMTDLNSTLTDLETKISLQKQDDQYSQVFAEQTGVLHVLPDILGMKKIPIGTPIAEIYPLLKAETQVNLTSYIPSTQISGMKVGQKVRFTVQQNLPKPEILTGIIKQIDSAPTAFKEGNAYKVSATTAINAKDLPNIRYGLQGKTVTIIGKKTYFNYFLDKIMGRTS.

The Cytoplasmic segment spans residues 1-21 (MFDKKLLESSELYDKRYRNFS). Residues 22-44 (TLIILPLFILLVGGVIFTFFAHK) form a helical membrane-spanning segment. The Extracellular portion of the chain corresponds to 45–473 (ELTVISTGSI…FLDKIMGRTS (429 aa)).

Belongs to the membrane fusion protein (MFP) (TC 8.A.1) family.

It localises to the cell membrane. Its function is as follows. Involved in the secretion of a lactococcin. The polypeptide is Lactococcin A secretion protein LcnD-like (lcnD) (Lactococcus lactis subsp. lactis (strain IL1403) (Streptococcus lactis)).